The sequence spans 116 residues: Non-specific lipid-transfer protein 10 (116 aa).

The signal sequence occupies residues 1-22 (MMRVVLPLCLLLASIFAWGSEA). 4 disulfide bridges follow: Cys26/Cys73, Cys36/Cys50, Cys51/Cys98, and Cys71/Cys112.

Belongs to the plant LTP family.

Plant non-specific lipid-transfer proteins transfer phospholipids as well as galactolipids across membranes. May play a role in wax or cutin deposition in the cell walls of expanding epidermal cells and certain secretory tissues. This is Non-specific lipid-transfer protein 10 (LTP10) from Arabidopsis thaliana (Mouse-ear cress).